Consider the following 395-residue polypeptide: S-adenosylmethionine synthase (395 aa).

Residue H16 participates in ATP binding. Position 18 (D18) interacts with Mg(2+). E44 is a binding site for K(+). L-methionine contacts are provided by E57 and Q100. Residues 100–110 (QSPDIAQGVDD) form a flexible loop region. ATP contacts are provided by residues 174–176 (DAK), 241–242 (RF), D250, 256–257 (RK), A273, and K277. D250 contributes to the L-methionine binding site. K281 contributes to the L-methionine binding site.

The protein belongs to the AdoMet synthase family. In terms of assembly, homotetramer; dimer of dimers. Mg(2+) is required as a cofactor. Requires K(+) as cofactor.

Its subcellular location is the cytoplasm. The catalysed reaction is L-methionine + ATP + H2O = S-adenosyl-L-methionine + phosphate + diphosphate. It participates in amino-acid biosynthesis; S-adenosyl-L-methionine biosynthesis; S-adenosyl-L-methionine from L-methionine: step 1/1. Catalyzes the formation of S-adenosylmethionine (AdoMet) from methionine and ATP. The overall synthetic reaction is composed of two sequential steps, AdoMet formation and the subsequent tripolyphosphate hydrolysis which occurs prior to release of AdoMet from the enzyme. This Levilactobacillus brevis (strain ATCC 367 / BCRC 12310 / CIP 105137 / JCM 1170 / LMG 11437 / NCIMB 947 / NCTC 947) (Lactobacillus brevis) protein is S-adenosylmethionine synthase.